Here is a 367-residue protein sequence, read N- to C-terminus: Lysophosphatidic acid receptor 5 (367 aa).

The Extracellular segment spans residues 1-25; it reads MQANSSAKSLPTECPDYQPIHHLHL. Asn4 carries an N-linked (GlcNAc...) asparagine glycan. The helical transmembrane segment at 26–46 threads the bilayer; the sequence is VVYSVVLAAGLPLNALALWVF. At 47–54 the chain is on the cytoplasmic side; it reads LRALRVHS. The helical transmembrane segment at 55–75 threads the bilayer; sequence VVSVYMCNLAASDLLFTLSLP. At 76 to 95 the chain is on the extracellular side; that stretch reads LRLSYYARHYWPFPDFLCQL. A disulfide bridge links Cys93 with Cys174. A helical transmembrane segment spans residues 96 to 116; sequence AGAVFQMNMYGSCIFLTLINV. Residues 117-135 are Cytoplasmic-facing; sequence DRYAAIVHPLRLRHLRRPR. The chain crosses the membrane as a helical span at residues 136 to 156; the sequence is VARLLCLGVWALILVFAVPTI. The Extracellular portion of the chain corresponds to 157 to 186; the sequence is LAHQPSSCARDGRNVSLCFESFSDKLWKGS. A glycan (N-linked (GlcNAc...) asparagine) is linked at Asn170. The helical transmembrane segment at 187-207 threads the bilayer; it reads LLPLLLLAEALGFLLPLAAVV. Residues 208 to 238 are Cytoplasmic-facing; sequence YSSGRVFWTLARPDATRSQRRRKTVRLLLAS. A helical transmembrane segment spans residues 239–259; that stretch reads LVIFLLCFVPYNATLAVYGLL. The Extracellular segment spans residues 260–275; it reads RGEVVPASSEARKKVR. The helical transmembrane segment at 276–296 threads the bilayer; that stretch reads GVLMVMVLLAGANCVLDPLVY. Over 297–367 the chain is Cytoplasmic; sequence YFSAEGFRNT…FTPSHEDSSF (71 aa). A compositionally biased stretch (low complexity) spans 332-350; that stretch reads LTETAHASTLTTTSQGQLQ. The tract at residues 332 to 367 is disordered; it reads LTETAHASTLTTTSQGQLQPSDPRSSFTPSHEDSSF. The segment covering 351–360 has biased composition (polar residues); the sequence is PSDPRSSFTP.

The protein belongs to the G-protein coupled receptor 1 family.

It localises to the cell membrane. Its function is as follows. Receptor for lysophosphatidic acid (LPA), a mediator of diverse cellular activities. This chain is Lysophosphatidic acid receptor 5 (LPAR5), found in Bos taurus (Bovine).